Here is a 212-residue protein sequence, read N- to C-terminus: Telomere repeats-binding bouquet formation protein 2 (212 aa).

It belongs to the TERB2 family. In terms of assembly, component of the MAJIN-TERB1-TERB2 complex.

Its function is as follows. Meiosis-specific telomere-associated protein involved in meiotic telomere attachment to the nucleus inner membrane, a crucial step for homologous pairing and synapsis. Component of the MAJIN-TERB1-TERB2 complex, which promotes telomere cap exchange by mediating attachment of telomeric DNA to the inner nuclear membrane and replacement of the protective cap of telomeric chromosomes: in early meiosis, the MAJIN-TERB1-TERB2 complex associates with telomeric DNA and the shelterin/telosome complex. During prophase, the complex matures and promotes release of the shelterin/telosome complex from telomeric DNA. This Danio rerio (Zebrafish) protein is Telomere repeats-binding bouquet formation protein 2.